The chain runs to 144 residues: Large ribosomal subunit protein uL15 (144 aa).

Positions 1-50 (MRLNTLSPAAGAKSAKKRVGRGIGSGLGKTGGRGVKGAGSRSGGGVRAGF) are disordered. A compositionally biased stretch (gly residues) spans 21–50 (RGIGSGLGKTGGRGVKGAGSRSGGGVRAGF).

Belongs to the universal ribosomal protein uL15 family. As to quaternary structure, part of the 50S ribosomal subunit.

In terms of biological role, binds to the 23S rRNA. The protein is Large ribosomal subunit protein uL15 of Tolumonas auensis (strain DSM 9187 / NBRC 110442 / TA 4).